Consider the following 356-residue polypeptide: MGVQEMDPLTQLSLPPGFRFYPTDEELLVQYLCRKVAGHDFSLQIIAEIDLYKFDPWVLPSKAIFGEKEWYFFSPRDRKYPNGSRPNRVAGSGYWKATGTDKVITTDGRKVGIKKALVFYIGKAPKGTKTNWIMHEYRLSEPTTKTGSSRLDDWVLCRIYKKNSGGQKSSCSDLQNKDISHASSSSSSSQFDDMLESLPAIEDRYFSLPRVNSIRNFQQNDKINLQQLSSGNFDWAAMAGLNSFPELRTGNQVPTPGNQTPVLINTNQYHNHNDNLNNFNEFFANSTALNFHGEVKFEGGVDQEVESSVRAQRLNSVNPGFFQENSTGFSSSYTNSVPDPFGIRYPTQTVNMGFTG.

The NAC domain maps to 14 to 162 (LPPGFRFYPT…DWVLCRIYKK (149 aa)). The DNA-binding element occupies 111–168 (VGIKKALVFYIGKAPKGTKTNWIMHEYRLSEPTTKTGSSRLDDWVLCRIYKKNSGGQK). The interval 163–191 (NSGGQKSSCSDLQNKDISHASSSSSSSQF) is disordered. The segment covering 164 to 174 (SGGQKSSCSDL) has biased composition (polar residues).

Expressed in guard cells of the epidermis.

The protein localises to the nucleus. Functionally, transcription factor that acts downstream of MYC2 in the jasmonate-mediated response to Botrytis cinerea infection. With MYC2 forms a transcription module that regulates wounding-responsive genes. Involved in jasmonate- and coronatine-mediated stomatal reopening in response to Pseudomonas syringae pv tomato DC3000 infection. Regulates the expression of threonine deaminase 2 (TD2) through promoter binding. The chain is NAC domain-containing protein JA2L from Solanum lycopersicum (Tomato).